A 180-amino-acid polypeptide reads, in one-letter code: Large ribosomal subunit protein uL6 (180 aa).

It belongs to the universal ribosomal protein uL6 family. Part of the 50S ribosomal subunit.

Functionally, this protein binds to the 23S rRNA, and is important in its secondary structure. It is located near the subunit interface in the base of the L7/L12 stalk, and near the tRNA binding site of the peptidyltransferase center. This Borrelia duttonii (strain Ly) protein is Large ribosomal subunit protein uL6.